The sequence spans 351 residues: Methylthioribose-1-phosphate isomerase (351 aa).

Substrate is bound by residues 55-57 (RGA), R95, and Q202. D243 serves as the catalytic Proton donor. 253–254 (NK) is a binding site for substrate.

Belongs to the eIF-2B alpha/beta/delta subunits family. MtnA subfamily.

The enzyme catalyses 5-(methylsulfanyl)-alpha-D-ribose 1-phosphate = 5-(methylsulfanyl)-D-ribulose 1-phosphate. Its pathway is amino-acid biosynthesis; L-methionine biosynthesis via salvage pathway; L-methionine from S-methyl-5-thio-alpha-D-ribose 1-phosphate: step 1/6. Its function is as follows. Catalyzes the interconversion of methylthioribose-1-phosphate (MTR-1-P) into methylthioribulose-1-phosphate (MTRu-1-P). This chain is Methylthioribose-1-phosphate isomerase, found in Marinobacter nauticus (strain ATCC 700491 / DSM 11845 / VT8) (Marinobacter aquaeolei).